The chain runs to 360 residues: uncharacterized protein (360 aa).

An ABC transporter domain is found at 4 to 235 (LSLQHIQKIY…PANMFVSGFI (232 aa)). Residue 37–44 (GPSGCGKS) participates in ATP binding.

It belongs to the ABC transporter superfamily.

This is an uncharacterized protein from Escherichia coli (strain K12).